The chain runs to 1124 residues: Angiopoietin-1 receptor (1124 aa).

The first 22 residues, 1 to 22, serve as a signal peptide directing secretion; it reads MDSLASLVLCGVSLLLSGTVEG. The Extracellular segment spans residues 23 to 748; that stretch reads AMDLILINSL…ADLGGGKMLL (726 aa). A disulfide bond links Cys-44 and Cys-102. In terms of domain architecture, Ig-like C2-type 1 spans 44–123; it reads CIASGWRPHE…RTMKMRQQAS (80 aa). Residues Asn-140 and Asn-158 are each glycosylated (N-linked (GlcNAc...) asparagine). EGF-like domains follow at residues 210 to 252, 254 to 299, and 301 to 341; these read RCEA…RTCE, ACEL…LQCN, and ACHP…LQCE. Cystine bridges form between Cys-211–Cys-220, Cys-224–Cys-233, Cys-227–Cys-240, Cys-242–Cys-251, Cys-255–Cys-264, Cys-268–Cys-274, Cys-280–Cys-287, Cys-289–Cys-298, Cys-302–Cys-311, Cys-315–Cys-323, Cys-317–Cys-329, Cys-331–Cys-340, and Cys-370–Cys-424. Residues 350 to 440 form the Ig-like C2-type 2 domain; it reads PKIVDLPDHI…GMVEKPFNIS (91 aa). N-linked (GlcNAc...) asparagine glycosylation is found at Asn-399, Asn-438, Asn-464, Asn-560, Asn-596, Asn-649, and Asn-691. Fibronectin type-III domains lie at 447-541, 545-636, and 641-735; these read PLNA…TASI, PPRG…TLSD, and QPEN…LPES. Residues 749–769 traverse the membrane as a helical segment; that stretch reads IAILGSAGMTCLTVLLAFLII. The Cytoplasmic segment spans residues 770-1124; the sequence is LQLKRANVQR…GIDCSAEEAA (355 aa). A Protein kinase domain is found at 824–1096; it reads IKFQDVIGEG…QILVSLNRML (273 aa). Residues 830–838 and Lys-855 contribute to the ATP site; that span reads IGEGNFGQV. A Phosphotyrosine; by autocatalysis modification is found at Tyr-860. Residue Asp-964 is the Proton acceptor of the active site. A phosphotyrosine; by autocatalysis mark is found at Tyr-992, Tyr-1102, and Tyr-1108.

It belongs to the protein kinase superfamily. Tyr protein kinase family. Tie subfamily. As to quaternary structure, homodimer. Heterodimer with TIE1. Interacts with ANGPT1, ANGPT2 and ANGPT4. At cell-cell contacts in quiescent cells, forms a signaling complex composed of ANGPT1 plus TEK molecules from two adjoining cells. In the absence of endothelial cell-cell contacts, interaction with ANGPT1 mediates contacts with the extracellular matrix. Interacts with PTPRB; this promotes endothelial cell-cell adhesion. Interacts with DOK2, GRB2, GRB7, GRB14, PIK3R1 and PTPN11/SHP2. Colocalizes with DOK2 at contacts with the extracellular matrix in migrating cells. Interacts (tyrosine phosphorylated) with TNIP2. Interacts (tyrosine phosphorylated) with SHC1 (via SH2 domain). Proteolytic processing leads to the shedding of the extracellular domain (soluble TIE-2 alias sTIE-2). In terms of processing, autophosphorylated on tyrosine residues in response to ligand binding. Autophosphorylation occurs in trans, i.e. one subunit of the dimeric receptor phosphorylates tyrosine residues on the other subunit. Autophosphorylation occurs in a sequential manner, where Tyr-992 in the kinase activation loop is phosphorylated first, followed by autophosphorylation at Tyr-1108 and at additional tyrosine residues. ANGPT1-induced phosphorylation is impaired during hypoxia, due to increased expression of ANGPT2. Phosphorylation is important for interaction with GRB14, PIK3R1 and PTPN11. Phosphorylation at Tyr-1102 is important for interaction with SHC1, GRB2 and GRB7. Phosphorylation at Tyr-1108 is important for interaction with DOK2 and for coupling to downstream signal transduction pathways in endothelial cells. Dephosphorylated by PTPRB. Post-translationally, ubiquitinated. The phosphorylated receptor is ubiquitinated and internalized, leading to its degradation. As to expression, detected in umbilical vein endothelial cells. Proteolytic processing gives rise to a soluble extracellular domain that is detected in blood plasma (at protein level). Predominantly expressed in endothelial cells and their progenitors, the angioblasts. Has been directly found in placenta and lung, with a lower level in umbilical vein endothelial cells, brain and kidney.

It localises to the cell membrane. The protein resides in the cell junction. It is found in the focal adhesion. The protein localises to the cytoplasm. Its subcellular location is the cytoskeleton. It localises to the secreted. The catalysed reaction is L-tyrosyl-[protein] + ATP = O-phospho-L-tyrosyl-[protein] + ADP + H(+). Angiopoietin binding leads to receptor dimerization and activation by autophosphorylation at Tyr-992 on the kinase activation loop. Inhibited by staurosporine, K252a, PP2, damnacanthal, SB203580, CEP-11207, CEP-11981 and CE-245677. Inhibited by triazine, thienopyrimidine and thiazolopyrimidine derivatives. Tyrosine-protein kinase that acts as a cell-surface receptor for ANGPT1, ANGPT2 and ANGPT4 and regulates angiogenesis, endothelial cell survival, proliferation, migration, adhesion and cell spreading, reorganization of the actin cytoskeleton, but also maintenance of vascular quiescence. Has anti-inflammatory effects by preventing the leakage of pro-inflammatory plasma proteins and leukocytes from blood vessels. Required for normal angiogenesis and heart development during embryogenesis. Required for post-natal hematopoiesis. After birth, activates or inhibits angiogenesis, depending on the context. Inhibits angiogenesis and promotes vascular stability in quiescent vessels, where endothelial cells have tight contacts. In quiescent vessels, ANGPT1 oligomers recruit TEK to cell-cell contacts, forming complexes with TEK molecules from adjoining cells, and this leads to preferential activation of phosphatidylinositol 3-kinase and the AKT1 signaling cascades. In migrating endothelial cells that lack cell-cell adhesions, ANGT1 recruits TEK to contacts with the extracellular matrix, leading to the formation of focal adhesion complexes, activation of PTK2/FAK and of the downstream kinases MAPK1/ERK2 and MAPK3/ERK1, and ultimately to the stimulation of sprouting angiogenesis. ANGPT1 signaling triggers receptor dimerization and autophosphorylation at specific tyrosine residues that then serve as binding sites for scaffold proteins and effectors. Signaling is modulated by ANGPT2 that has lower affinity for TEK, can promote TEK autophosphorylation in the absence of ANGPT1, but inhibits ANGPT1-mediated signaling by competing for the same binding site. Signaling is also modulated by formation of heterodimers with TIE1, and by proteolytic processing that gives rise to a soluble TEK extracellular domain. The soluble extracellular domain modulates signaling by functioning as decoy receptor for angiopoietins. TEK phosphorylates DOK2, GRB7, GRB14, PIK3R1; SHC1 and TIE1. In Homo sapiens (Human), this protein is Angiopoietin-1 receptor.